The sequence spans 155 residues: Putative pre-16S rRNA nuclease (155 aa).

Belongs to the YqgF nuclease family.

It localises to the cytoplasm. Functionally, could be a nuclease involved in processing of the 5'-end of pre-16S rRNA. The polypeptide is Putative pre-16S rRNA nuclease (Xylella fastidiosa (strain M12)).